Here is a 787-residue protein sequence, read N- to C-terminus: uncharacterized protein (787 aa).

Methionine 1 carries the N-acetylmethionine modification. Disordered regions lie at residues 1–115 (MFDG…NDHK), 130–200 (TNPF…QRSE), and 217–238 (VSSG…ASQD). Residues 36-54 (VPSTIKKSTNIARTSTAET) show a composition bias toward polar residues. Serine 63 carries the post-translational modification Phosphoserine. Positions 130–142 (TNPFTTSANSNAH) are enriched in polar residues. A compositionally biased stretch (low complexity) spans 160–169 (SITTSISNNT). The segment covering 170–184 (TKEEIESNNDSERDS) has biased composition (basic and acidic residues). Residues 218–230 (SSGSSLSLDTSEN) are compositionally biased toward low complexity. Residues serine 254, serine 313, serine 342, serine 345, serine 390, serine 477, serine 492, serine 546, serine 683, and serine 699 each carry the phosphoserine modification.

The protein resides in the cytoplasm. This is an uncharacterized protein from Saccharomyces cerevisiae (strain ATCC 204508 / S288c) (Baker's yeast).